A 156-amino-acid chain; its full sequence is Iron sulfur cluster assembly protein 2, mitochondrial (156 aa).

Residues 1–26 (MFARLANPAHFKPLTGSHITRAAKRL) constitute a mitochondrion transit peptide.

Belongs to the NifU family. Component of the core Fe-S cluster (ISC) assembly machinery. Interacts with frataxin. Interacts with the mitochondrial co-chaperones JAC1 and SSQ1. Interacts with NFS1. Interacts with ferredoxin YAH1; interacts with the reduced form. Requires [2Fe-2S] cluster as cofactor.

The protein resides in the mitochondrion matrix. It functions in the pathway cofactor biosynthesis; iron-sulfur cluster biosynthesis. Its function is as follows. Scaffold protein for the de novo synthesis of iron-sulfur (Fe-S) clusters within mitochondria, which is required for maturation of both mitochondrial and cytoplasmic [2Fe-2S] and [4Fe-4S] proteins. First, a [2Fe-2S] cluster is transiently assembled on the scaffold proteins ISU1 and ISU2. In a second step, the cluster is released from ISU1/ISU2, transferred to glutaredoxin GRX5, followed by the formation of mitochondrial [2Fe-2S] proteins, the synthesis of [4Fe-4S] clusters and their target-specific insertion into the recipient apoproteins. Cluster assembly on ISU1/ISU2 depends on the function of the cysteine desulfurase complex NFS1-ISD11, which serves as the sulfur donor for cluster synthesis, the iron-binding protein frataxin (YFH1) as the putative iron donor, and the electron transfer chain comprised of ferredoxin reductase ARH1 and ferredoxin YAH1, which receive their electrons from NADH. Fe-S cluster release from ISU1/ISU2 is achieved by interaction with the Hsp70 chaperone SSQ1, assisted by the DnaJ-like co-chaperone JAC1 and the nucleotide exchange factor MGE1. ISU1 is the major isoform in yeast, while ISU2 is not detectable in cells grown to stationary phase. Also involved in production of a sulfur precursor required for thiolation of cytoplasmic tRNAs. The sequence is that of Iron sulfur cluster assembly protein 2, mitochondrial from Saccharomyces cerevisiae (strain ATCC 204508 / S288c) (Baker's yeast).